We begin with the raw amino-acid sequence, 172 residues long: MSVLQVLTFPDDRLRTVAKPVEEVTPEIQKIVDDMIETMYDEEGIGLAATQVDIHKRIVVIDISETRDEPMVLINPEILEKRGEDGIEEGCLSVPGARALVPRAAEVTVKALDRDGKEYTFEADDLLAICVQHELDHLMGKLFVDYLSPLKRKRIQDKLAKIKRFNEKQQNA.

Fe cation-binding residues include cysteine 91 and histidine 133. Glutamate 134 is an active-site residue. Histidine 137 serves as a coordination point for Fe cation.

It belongs to the polypeptide deformylase family. It depends on Fe(2+) as a cofactor.

The catalysed reaction is N-terminal N-formyl-L-methionyl-[peptide] + H2O = N-terminal L-methionyl-[peptide] + formate. In terms of biological role, removes the formyl group from the N-terminal Met of newly synthesized proteins. Requires at least a dipeptide for an efficient rate of reaction. N-terminal L-methionine is a prerequisite for activity but the enzyme has broad specificity at other positions. The sequence is that of Peptide deformylase from Vibrio campbellii (strain ATCC BAA-1116).